The sequence spans 107 residues: Small ribosomal subunit protein uS10c (107 aa).

The protein belongs to the universal ribosomal protein uS10 family. As to quaternary structure, part of the 30S ribosomal subunit.

Its subcellular location is the plastid. It localises to the chloroplast. Its function is as follows. Involved in the binding of tRNA to the ribosomes. This chain is Small ribosomal subunit protein uS10c, found in Thalassiosira pseudonana (Marine diatom).